Here is a 162-residue protein sequence, read N- to C-terminus: Ribosome maturation factor RimP (162 aa).

This sequence belongs to the RimP family.

The protein localises to the cytoplasm. Its function is as follows. Required for maturation of 30S ribosomal subunits. The protein is Ribosome maturation factor RimP of Leptospira borgpetersenii serovar Hardjo-bovis (strain JB197).